The following is a 720-amino-acid chain: Pollen receptor-like kinase 1 (720 aa).

The LRR 1; degenerate repeat unit spans residues 40–64 (LCSRGHLLIIFLLLVSPFNDAAVDV). The stretch at 123-146 (LGVLCYEGDVWGLQLENLDLSGVI) is one LRR 2; degenerate repeat. LRR repeat units follow at residues 154 to 179 (LHFL…SLEP), 226 to 248 (LPQV…HFPP), and 249 to 273 (NVLK…SLMD). The disordered stretch occupies residues 288 to 319 (LESACNSPSQEANNPDSRNSSTISGQSSTDVI). Residues 291 to 317 (ACNSPSQEANNPDSRNSSTISGQSSTD) show a composition bias toward polar residues. Residues 330–350 (MLIVAVCLVVLCLLIVLILII) form a helical membrane-spanning segment. Polar residues-rich tracts occupy residues 356 to 382 (SSSQ…TSSA) and 389 to 405 (LSGN…NSNK). Residues 356–409 (SSSQNPQPVESNYSNNDRDQNAFTSSAPDDHVTLSGNSTYSNNQHSNSNKAEAP) form a disordered region. One can recognise a Protein kinase domain in the interval 434 to 702 (RASAEVLGSG…KEVVQSIQSL (269 aa)). ATP contacts are provided by residues 440–448 (LGSGNLGSS) and lysine 462.

Belongs to the protein kinase superfamily. In terms of assembly, interacts with KIP1. In terms of processing, autophosphorylated. As to expression, expressed in mature pollen grains and pollen tubes, but not in style, petal, leaf, root or sepal. Very low expression in the ovary.

It localises to the microsome membrane. Its subcellular location is the cytoplasm. It carries out the reaction L-seryl-[protein] + ATP = O-phospho-L-seryl-[protein] + ADP + H(+). It catalyses the reaction L-threonyl-[protein] + ATP = O-phospho-L-threonyl-[protein] + ADP + H(+). The enzyme catalyses L-tyrosyl-[protein] + ATP = O-phospho-L-tyrosyl-[protein] + ADP + H(+). Its function is as follows. Dual-specificity kinase with both serine/threonine and tyrosine kinase activities. Required for postmeiotic development of microspores. Involved in embryo sac development at the late stages of megagametogenesis. Involved in the phosphorylation of KIP1. The protein is Pollen receptor-like kinase 1 of Petunia integrifolia (Violet-flowered petunia).